A 181-amino-acid chain; its full sequence is Protein GrpE (181 aa).

Residues 1-20 (MENTQENPASQSAEENGSET) show a composition bias toward polar residues. The segment at 1–39 (MENTQENPASQSAEENGSETQAAQDAAPAAEAADAALAE) is disordered. The segment covering 21 to 39 (QAAQDAAPAAEAADAALAE) has biased composition (low complexity).

Belongs to the GrpE family. As to quaternary structure, homodimer.

The protein localises to the cytoplasm. Participates actively in the response to hyperosmotic and heat shock by preventing the aggregation of stress-denatured proteins, in association with DnaK and GrpE. It is the nucleotide exchange factor for DnaK and may function as a thermosensor. Unfolded proteins bind initially to DnaJ; upon interaction with the DnaJ-bound protein, DnaK hydrolyzes its bound ATP, resulting in the formation of a stable complex. GrpE releases ADP from DnaK; ATP binding to DnaK triggers the release of the substrate protein, thus completing the reaction cycle. Several rounds of ATP-dependent interactions between DnaJ, DnaK and GrpE are required for fully efficient folding. The polypeptide is Protein GrpE (Burkholderia multivorans (strain ATCC 17616 / 249)).